The sequence spans 72 residues: Hypertrehalosaemic prohormone (72 aa).

Residues 1 to 21 (MNHLVKVLIVVVAIALVLCEA) form the signal peptide. Q22 carries the post-translational modification Pyrrolidone carboxylic acid. Position 31 is a threonine amide (T31).

It belongs to the AKH/HRTH/RPCH family. Expressed in corpora cardiaca.

The protein localises to the secreted. Hypertrehalosaemic factors are neuropeptides that elevate the level of trehalose in the hemolymph (trehalose is the major carbohydrate in the hemolymph of insects). This chain is Hypertrehalosaemic prohormone, found in Blaberus discoidalis (Tropical cockroach).